Consider the following 365-residue polypeptide: Cobalt-precorrin-5B C(1)-methyltransferase (365 aa).

The protein belongs to the CbiD family.

It carries out the reaction Co-precorrin-5B + S-adenosyl-L-methionine = Co-precorrin-6A + S-adenosyl-L-homocysteine. The protein operates within cofactor biosynthesis; adenosylcobalamin biosynthesis; cob(II)yrinate a,c-diamide from sirohydrochlorin (anaerobic route): step 6/10. Its function is as follows. Catalyzes the methylation of C-1 in cobalt-precorrin-5B to form cobalt-precorrin-6A. This is Cobalt-precorrin-5B C(1)-methyltransferase from Pseudomonas fluorescens (strain ATCC BAA-477 / NRRL B-23932 / Pf-5).